Here is a 185-residue protein sequence, read N- to C-terminus: Acireductone dioxygenase (185 aa).

Fe(2+)-binding residues include histidine 97, histidine 99, glutamate 103, and histidine 141. Histidine 97, histidine 99, glutamate 103, and histidine 141 together coordinate Ni(2+).

It belongs to the acireductone dioxygenase (ARD) family. In terms of assembly, monomer. It depends on Fe(2+) as a cofactor. Ni(2+) is required as a cofactor.

The catalysed reaction is 1,2-dihydroxy-5-(methylsulfanyl)pent-1-en-3-one + O2 = 3-(methylsulfanyl)propanoate + CO + formate + 2 H(+). It catalyses the reaction 1,2-dihydroxy-5-(methylsulfanyl)pent-1-en-3-one + O2 = 4-methylsulfanyl-2-oxobutanoate + formate + 2 H(+). The protein operates within amino-acid biosynthesis; L-methionine biosynthesis via salvage pathway; L-methionine from S-methyl-5-thio-alpha-D-ribose 1-phosphate: step 5/6. Catalyzes 2 different reactions between oxygen and the acireductone 1,2-dihydroxy-3-keto-5-methylthiopentene (DHK-MTPene) depending upon the metal bound in the active site. Fe-containing acireductone dioxygenase (Fe-ARD) produces formate and 2-keto-4-methylthiobutyrate (KMTB), the alpha-ketoacid precursor of methionine in the methionine recycle pathway. Ni-containing acireductone dioxygenase (Ni-ARD) produces methylthiopropionate, carbon monoxide and formate, and does not lie on the methionine recycle pathway. The chain is Acireductone dioxygenase from Stenotrophomonas maltophilia (strain K279a).